Here is a 141-residue protein sequence, read N- to C-terminus: Hemoglobin subunit alpha (141 aa).

One can recognise a Globin domain in the interval 1–141 (VLSPADKTNV…VSTVLTSKYR (141 aa)). At Ser-3 the chain carries Phosphoserine. Position 7 is an N6-succinyllysine (Lys-7). Thr-8 is modified (phosphothreonine). At Lys-11 the chain carries N6-succinyllysine. An N6-acetyllysine; alternate modification is found at Lys-16. Lys-16 is subject to N6-succinyllysine; alternate. Tyr-24 is modified (phosphotyrosine). Ser-35 carries the post-translational modification Phosphoserine. N6-succinyllysine is present on Lys-40. Ser-49 bears the Phosphoserine mark. An O2-binding site is contributed by His-58. His-87 contacts heme b. Ser-102 is modified (phosphoserine). Thr-108 is subject to Phosphothreonine. Phosphoserine is present on residues Ser-124 and Ser-131. Thr-134 and Thr-137 each carry phosphothreonine. Residue Ser-138 is modified to Phosphoserine.

This sequence belongs to the globin family. In terms of assembly, heterotetramer of two alpha chains and two beta chains. Red blood cells.

Involved in oxygen transport from the lung to the various peripheral tissues. The protein is Hemoglobin subunit alpha of Otospermophilus beecheyi (California ground squirrel).